Consider the following 350-residue polypeptide: Histidinol-phosphate aminotransferase 1 (350 aa).

K210 carries the N6-(pyridoxal phosphate)lysine modification.

This sequence belongs to the class-II pyridoxal-phosphate-dependent aminotransferase family. Histidinol-phosphate aminotransferase subfamily. Homodimer. It depends on pyridoxal 5'-phosphate as a cofactor.

The catalysed reaction is L-histidinol phosphate + 2-oxoglutarate = 3-(imidazol-4-yl)-2-oxopropyl phosphate + L-glutamate. It functions in the pathway amino-acid biosynthesis; L-histidine biosynthesis; L-histidine from 5-phospho-alpha-D-ribose 1-diphosphate: step 7/9. This is Histidinol-phosphate aminotransferase 1 from Pseudomonas fluorescens (strain Pf0-1).